The chain runs to 206 residues: MGAEWELGAEAGGSLLLCAALLAAGCALGLRLGRGQGAADRGALIWLCYDALVHFALEGPFVYLSLVGNVANSDGLIASLWKEYGKADARWVYFDPTIVSVEILTVALDGSLALFLIYAIVKEKYYRHFLQITLCVCELYGCWMTFLPEWLTRSPNLNTSNWLYCWLYLFFFNGVWVLIPGLLLWQSWLELKKMHQKETSSVKKFQ.

4 helical membrane passes run 10–30 (EAGGSLLLCAALLAAGCALGL), 42–62 (GALIWLCYDALVHFALEGPFV), 101–121 (VEILTVALDGSLALFLIYAIV), and 165–185 (CWLYLFFFNGVWVLIPGLLLW). Residues 39–184 (ADRGALIWLC…VWVLIPGLLL (146 aa)) enclose the EXPERA domain.

This sequence belongs to the EBP family. In terms of assembly, homodimer. Widely expressed with highest levels in liver, lung and kidney.

The protein resides in the endoplasmic reticulum membrane. In terms of biological role, does not possess sterol isomerase activity and does not bind sigma ligands. In Homo sapiens (Human), this protein is Emopamil-binding protein-like (EBPL).